A 485-amino-acid polypeptide reads, in one-letter code: MSPQTETKASVGFKAGVKDYKLTYYTPEYETKDTDILAAFRVTPQPGVPPEEAGAAVAAESSTGTWTTVWTDGLTSLDRYKGRCYGIEPVPGEDNQYIAYVAYPLDLFEEGSVTNMFTSIVGNVFGFKALRALRLEDLRIPTAYVKTFEGPPHGIQVERDKLNKYGRPLLGCTIKPKLGLSAKNYGRACYECLRGGLDFTKDDENVNSQPFMRWRDRFLFCAEAIYKAQAETGEIKGHYLNATAGTCEEMLKRAVFARELGVPIVMHDYLTGGFTANTSLSHYCRDNGLLLHIHRAMHAVIDRQKNHGMHFRVLAKALRMSGGDHIHSGTVVGKLEGEREITLGFVDLLRDDFIEKDRSRGIYFTQDWVSLPGVLPVASGGIHVWHMPALTEIFGDDSVLQFGGGTLGHPWGNAPGAVANRVALEACVQARNEGRDLATEGNEIIREATKWSPELAAACEVWKEIKFEFQAMDTLDTDKDKDKKR.

A propeptide spanning residues Met1–Ser2 is cleaved from the precursor. N-acetylproline is present on Pro3. Position 14 is an N6,N6,N6-trimethyllysine (Lys14). Positions 123 and 173 each coordinate substrate. The active-site Proton acceptor is Lys175. Lys177 lines the substrate pocket. Mg(2+) contacts are provided by Lys201, Asp203, and Glu204. Lys201 carries the N6-carboxylysine modification. The Proton acceptor role is filled by His294. Residues Arg295, His327, and Ser379 each coordinate substrate.

It belongs to the RuBisCO large chain family. Type I subfamily. As to quaternary structure, heterohexadecamer of 8 large chains and 8 small chains; disulfide-linked. The disulfide link is formed within the large subunit homodimers. Mg(2+) is required as a cofactor. Post-translationally, the disulfide bond which can form in the large chain dimeric partners within the hexadecamer appears to be associated with oxidative stress and protein turnover.

It is found in the plastid. Its subcellular location is the chloroplast. The catalysed reaction is 2 (2R)-3-phosphoglycerate + 2 H(+) = D-ribulose 1,5-bisphosphate + CO2 + H2O. It carries out the reaction D-ribulose 1,5-bisphosphate + O2 = 2-phosphoglycolate + (2R)-3-phosphoglycerate + 2 H(+). Its function is as follows. RuBisCO catalyzes two reactions: the carboxylation of D-ribulose 1,5-bisphosphate, the primary event in carbon dioxide fixation, as well as the oxidative fragmentation of the pentose substrate in the photorespiration process. Both reactions occur simultaneously and in competition at the same active site. The sequence is that of Ribulose bisphosphate carboxylase large chain from Flaveria pringlei.